The chain runs to 246 residues: N-alpha-acetyltransferase 11 (246 aa).

An interaction with NAA15 region spans residues 1 to 58 (MNIRNARPEDLMNMQHCNLLCLPENYQMKYYFYHGLSWPQLSYIAEDEDGKIVGYVLA). In terms of domain architecture, N-acetyltransferase spans 1–152 (MNIRNARPED…DAYAMKRDLA (152 aa)). Residues 175–246 (EENQEAQDST…DSSEYLDSTS (72 aa)) form a disordered region. Polar residues predominate over residues 230–246 (SHSTDVQDSSEYLDSTS).

This sequence belongs to the acetyltransferase family. ARD1 subfamily. In terms of assembly, component of the N-terminal acetyltransferase A (NatA) complex composed of NAA11 and NAA15. Interacts with HIF1A.

Its subcellular location is the cytoplasm. The protein localises to the nucleus. The catalysed reaction is N-terminal glycyl-[protein] + acetyl-CoA = N-terminal N(alpha)-acetylglycyl-[protein] + CoA + H(+). The enzyme catalyses N-terminal L-alanyl-[protein] + acetyl-CoA = N-terminal N(alpha)-acetyl-L-alanyl-[protein] + CoA + H(+). It carries out the reaction N-terminal L-seryl-[protein] + acetyl-CoA = N-terminal N(alpha)-acetyl-L-seryl-[protein] + CoA + H(+). It catalyses the reaction N-terminal L-valyl-[protein] + acetyl-CoA = N-terminal N(alpha)-acetyl-L-valyl-[protein] + CoA + H(+). The catalysed reaction is N-terminal L-cysteinyl-[protein] + acetyl-CoA = N-terminal N(alpha)-acetyl-L-cysteinyl-[protein] + CoA + H(+). The enzyme catalyses N-terminal L-threonyl-[protein] + acetyl-CoA = N-terminal N(alpha)-acetyl-L-threonyl-[protein] + CoA + H(+). Displays alpha (N-terminal) acetyltransferase activity. Proposed alternative catalytic subunit of the N-terminal acetyltransferase A (NatA) complex. The polypeptide is N-alpha-acetyltransferase 11 (Naa11) (Rattus norvegicus (Rat)).